Consider the following 543-residue polypeptide: Chaperonin GroEL (543 aa).

ATP is bound by residues 29–32 (TLGP), lysine 50, 86–90 (DGTTT), glycine 415, and aspartate 495.

The protein belongs to the chaperonin (HSP60) family. As to quaternary structure, forms a cylinder of 14 subunits composed of two heptameric rings stacked back-to-back. Interacts with the co-chaperonin GroES.

Its subcellular location is the cytoplasm. The enzyme catalyses ATP + H2O + a folded polypeptide = ADP + phosphate + an unfolded polypeptide.. Its function is as follows. Together with its co-chaperonin GroES, plays an essential role in assisting protein folding. The GroEL-GroES system forms a nano-cage that allows encapsulation of the non-native substrate proteins and provides a physical environment optimized to promote and accelerate protein folding. This is Chaperonin GroEL from Karelsulcia muelleri (strain GWSS) (Sulcia muelleri).